Consider the following 869-residue polypeptide: Probable beta-glucosidase F (869 aa).

The signal sequence occupies residues 1–19 (MRVLSAIALVASLASSALS). Residues Asn-77 and Asn-261 are each glycosylated (N-linked (GlcNAc...) asparagine). Asp-289 is an active-site residue. N-linked (GlcNAc...) asparagine glycans are attached at residues Asn-332, Asn-364, Asn-399, and Asn-478. The segment at 677-697 (STYPPTRPPKGPTPTYPTAIP) is disordered. Residues 681–691 (PTRPPKGPTPT) show a composition bias toward pro residues. Asn-728 is a glycosylation site (N-linked (GlcNAc...) asparagine).

This sequence belongs to the glycosyl hydrolase 3 family.

It is found in the secreted. The enzyme catalyses Hydrolysis of terminal, non-reducing beta-D-glucosyl residues with release of beta-D-glucose.. It participates in glycan metabolism; cellulose degradation. Its function is as follows. Beta-glucosidases are one of a number of cellulolytic enzymes involved in the degradation of cellulosic biomass. Catalyzes the last step releasing glucose from the inhibitory cellobiose. This chain is Probable beta-glucosidase F (bglF), found in Aspergillus fumigatus (strain CBS 144.89 / FGSC A1163 / CEA10) (Neosartorya fumigata).